Reading from the N-terminus, the 311-residue chain is 4-hydroxy-tetrahydrodipicolinate synthase (311 aa).

Thr51 is a pyruvate binding site. Tyr140 (proton donor/acceptor) is an active-site residue. Lys168 serves as the catalytic Schiff-base intermediate with substrate. Ile209 serves as a coordination point for pyruvate.

It belongs to the DapA family. Homotetramer; dimer of dimers.

Its subcellular location is the cytoplasm. The catalysed reaction is L-aspartate 4-semialdehyde + pyruvate = (2S,4S)-4-hydroxy-2,3,4,5-tetrahydrodipicolinate + H2O + H(+). The protein operates within amino-acid biosynthesis; L-lysine biosynthesis via DAP pathway; (S)-tetrahydrodipicolinate from L-aspartate: step 3/4. Functionally, catalyzes the condensation of (S)-aspartate-beta-semialdehyde [(S)-ASA] and pyruvate to 4-hydroxy-tetrahydrodipicolinate (HTPA). The polypeptide is 4-hydroxy-tetrahydrodipicolinate synthase (Streptococcus pneumoniae (strain CGSP14)).